The primary structure comprises 157 residues: Mannose-specific lectin (157 aa).

A signal peptide (or 23; in 70% of the molecules) is located at residues 1-19 (MAKASLLILAAIFLGVITP). A Bulb-type lectin domain is found at 24–132 (DNILYSGETL…DRWATGTHTG (109 aa)). Alpha-D-mannopyranose-binding residues include Q49, D51, N53, Y57, D60, K61, W64, A65, N67, Q80, D82, N84, Y88, I95, W96, N99, N106, Q112, D114, N116, Y120, and W125. C52 and C75 are oxidised to a cystine. A propeptide spans 129–157 (THTGLVGIPASPPSEKYPTAGKIKLVTAK) (removed in mature form).

Homotetramer.

Its subcellular location is the secreted. In terms of biological role, mannose-specific lectin which binds alpha-D-linked mannose. Displays a high affinity for alpha-(1-3)-mannose oligomers. Displays antiviral activity and therefore may contribute to defense against infections. The polypeptide is Mannose-specific lectin (Galanthus nivalis (Common snowdrop)).